The following is a 93-amino-acid chain: Small ribosomal subunit protein uS19 (93 aa).

The protein belongs to the universal ribosomal protein uS19 family.

Functionally, protein S19 forms a complex with S13 that binds strongly to the 16S ribosomal RNA. The polypeptide is Small ribosomal subunit protein uS19 (Pseudarthrobacter chlorophenolicus (strain ATCC 700700 / DSM 12829 / CIP 107037 / JCM 12360 / KCTC 9906 / NCIMB 13794 / A6) (Arthrobacter chlorophenolicus)).